The following is a 592-amino-acid chain: Methionine--tRNA ligase (592 aa).

Residues 12–22 (PYANGPFHVGH) carry the 'HIGH' region motif. Positions 144, 147, 157, and 160 each coordinate Zn(2+). The 'KMSKS' region motif lies at 342–346 (KMSTS). Threonine 345 is a binding site for ATP.

Belongs to the class-I aminoacyl-tRNA synthetase family. MetG type 1 subfamily. Monomer. It depends on Zn(2+) as a cofactor.

It is found in the cytoplasm. The enzyme catalyses tRNA(Met) + L-methionine + ATP = L-methionyl-tRNA(Met) + AMP + diphosphate. Functionally, is required not only for elongation of protein synthesis but also for the initiation of all mRNA translation through initiator tRNA(fMet) aminoacylation. In Roseiflexus sp. (strain RS-1), this protein is Methionine--tRNA ligase.